We begin with the raw amino-acid sequence, 357 residues long: 4-hydroxymandelate oxidase (357 aa).

The FMN hydroxy acid dehydrogenase domain maps to 1 to 357 (MTYVSLADLE…RRLNTKLGVV (357 aa)). FMN is bound at residue glutamine 126. A 2-oxocarboxylate is bound at residue tyrosine 128. Threonine 154 is an FMN binding site. Residue arginine 163 coordinates a 2-oxocarboxylate. Residue lysine 228 participates in FMN binding. Histidine 252 serves as the catalytic Proton acceptor. Arginine 255 lines the a 2-oxocarboxylate pocket. FMN is bound by residues 283-287 (DGGIR) and 306-307 (GR).

The protein belongs to the FMN-dependent alpha-hydroxy acid dehydrogenase family. It depends on FMN as a cofactor.

It catalyses the reaction (S)-4-hydroxymandelate + O2 = 4-hydroxyphenylglyoxylate + H2O2. It participates in antibiotic biosynthesis; vancomycin biosynthesis. Its function is as follows. Catalyzes the oxidation of p-hydroxymandelate to p-hydroxybenzoylformate in the biosynthesis of L-(4-hydroxyphenyl)glycine and L-(3,5-dihydroxyphenyl)glycine, 2 non-proteinogenic amino acids occurring in the vancomycin group of antibiotics. The sequence is that of 4-hydroxymandelate oxidase (hmo) from Amycolatopsis orientalis (Nocardia orientalis).